Consider the following 391-residue polypeptide: UPF0229 protein CLH_2838 (391 aa).

2 disordered regions span residues 1-23 (MAIFRDRTDKQVDHDRAIEDKRR) and 75-107 (VATGTGEEKRGDKIESGSKKAMGKGNKGAGNEE). Residues 80-92 (GEEKRGDKIESGS) show a composition bias toward basic and acidic residues.

This sequence belongs to the UPF0229 family.

This chain is UPF0229 protein CLH_2838, found in Clostridium botulinum (strain Alaska E43 / Type E3).